Reading from the N-terminus, the 675-residue chain is DNA ligase (675 aa).

Residues Asp32–Asp36, Ser81–Leu82, and Glu113 each bind NAD(+). Residue Lys115 is the N6-AMP-lysine intermediate of the active site. Residues Arg136, Glu173, Lys291, and Lys315 each coordinate NAD(+). The Zn(2+) site is built by Cys409, Cys412, Cys427, and Cys433. The BRCT domain occupies Ser595–Glu675.

The protein belongs to the NAD-dependent DNA ligase family. LigA subfamily. Mg(2+) serves as cofactor. The cofactor is Mn(2+).

It catalyses the reaction NAD(+) + (deoxyribonucleotide)n-3'-hydroxyl + 5'-phospho-(deoxyribonucleotide)m = (deoxyribonucleotide)n+m + AMP + beta-nicotinamide D-nucleotide.. Its function is as follows. DNA ligase that catalyzes the formation of phosphodiester linkages between 5'-phosphoryl and 3'-hydroxyl groups in double-stranded DNA using NAD as a coenzyme and as the energy source for the reaction. It is essential for DNA replication and repair of damaged DNA. This Buchnera aphidicola subsp. Acyrthosiphon pisum (strain 5A) protein is DNA ligase.